The primary structure comprises 265 residues: MKNIHKIFSPEKKGKEKISVVTCYDFSFARILGETPIDSILVGDSLGMVFQGNSSTLPVTLEEMIYHTKVVRRGAPDKFIIADLPFLSYQTSIEEGIRSAGRMMKETDCDAVKIEGGSDFICELVAILKQIGIPVMGHLGLTPQSVHVFGGHRVQGKGEESSAKLLREAVALSESGAFSIVLEMIPAELGKRVSEEVGVPTIGIGAGPDCDGQVLVLNDLLGLDANFQPKFLKKFSNLHSIVKDAIESYHEEVRSGEFPGKDHSF.

Mg(2+)-binding residues include Asp44 and Asp83. 3-methyl-2-oxobutanoate-binding positions include 44–45 (DS), Asp83, and Lys113. Glu115 contributes to the Mg(2+) binding site. The active-site Proton acceptor is the Glu183.

Belongs to the PanB family. Homodecamer; pentamer of dimers. Requires Mg(2+) as cofactor.

It localises to the cytoplasm. The enzyme catalyses 3-methyl-2-oxobutanoate + (6R)-5,10-methylene-5,6,7,8-tetrahydrofolate + H2O = 2-dehydropantoate + (6S)-5,6,7,8-tetrahydrofolate. The protein operates within cofactor biosynthesis; (R)-pantothenate biosynthesis; (R)-pantoate from 3-methyl-2-oxobutanoate: step 1/2. Catalyzes the reversible reaction in which hydroxymethyl group from 5,10-methylenetetrahydrofolate is transferred onto alpha-ketoisovalerate to form ketopantoate. In Leptospira borgpetersenii serovar Hardjo-bovis (strain L550), this protein is 3-methyl-2-oxobutanoate hydroxymethyltransferase.